The sequence spans 154 residues: Ribonuclease H (154 aa).

The region spanning 1-142 (MRKQVEIFTD…CDELARAAAG (142 aa)) is the RNase H type-1 domain. Mg(2+) is bound by residues Asp10, Glu48, Asp70, and Asp134.

The protein belongs to the RNase H family. In terms of assembly, monomer. It depends on Mg(2+) as a cofactor.

The protein resides in the cytoplasm. The enzyme catalyses Endonucleolytic cleavage to 5'-phosphomonoester.. Endonuclease that specifically degrades the RNA of RNA-DNA hybrids. This chain is Ribonuclease H, found in Pectobacterium carotovorum subsp. carotovorum (strain PC1).